We begin with the raw amino-acid sequence, 364 residues long: G-protein coupled receptor 4 (364 aa).

At 1–8 (MCNVSQDS) the chain is on the extracellular side. Asparagine 3 carries N-linked (GlcNAc...) asparagine glycosylation. Residues 9 to 45 (CNIDSRLDSLFPPTLYIFVMVIGFPTNCLSLWAAFVQ) form a helical membrane-spanning segment. Intrachain disulfides connect cysteine 9–cysteine 258 and cysteine 90–cysteine 168. At 46–49 (VRQK) the chain is on the cytoplasmic side. Residues 50–80 (NELGVYLLNLSISDLLYIATLPPWVNYFLHQ) traverse the membrane as a helical segment. The Extracellular segment spans residues 81-85 (DNWIH). A helical transmembrane segment spans residues 86–121 (GPESCKLFGFILYTNIYISIGFLSCISVDRYLAVAH). The Cytoplasmic segment spans residues 122–129 (PLKFAKVR). Residues 130 to 156 (RVKTAAVVSAVVWAIEIGANSAPLFHN) traverse the membrane as a helical segment. Residues 157-172 (ELFEDRFNHTFCFEKY) lie on the Extracellular side of the membrane. The tract at residues 157 to 172 (ELFEDRFNHTFCFEKY) is extracellular loop 2 (ECL2). A glycan (N-linked (GlcNAc...) asparagine) is linked at asparagine 164. Residues 173–210 (PMEDWVAQMNLYRVFVGFLFPWVLMLFCYQGILRAVKT) form a helical membrane-spanning segment. Over 211-214 (NVST) the chain is Cytoplasmic. A helical membrane pass occupies residues 215 to 250 (EREEKAKIKRLALSLIAILLFCFAPYHLILLSRSVV). At 251–260 (YLGQPCDCTF) the chain is on the extracellular side. Residues 261 to 289 (EENIFTAYHVSLALTSLNCVADPILYCLA) traverse the membrane as a helical segment. The Cytoplasmic segment spans residues 290 to 364 (NEGARSEVTR…RVRRRRDCKC (75 aa)).

It belongs to the G-protein coupled receptor 1 family.

It localises to the cell membrane. With respect to regulation, activated by a network of residues that connects an extracellular-facing cavity to Glu-145, a conserved charged residue buried in the transmembrane core of the receptor. Protonation likely drives conformational changes in extracellular loop 2 (ECL2), which stabilizes movement of transmembrane 3 (TM3) and a series of rearrangements that connect the extracellular-facing cavity to Glu-145, a residue only conserved in proton-sensing G-protein coupled receptors. Its function is as follows. Proton-sensing G-protein coupled receptor activated by extracellular pH, which is required to monitor pH changes and generate adaptive reactions. Ligand binding causes a conformation change that triggers signaling via guanine nucleotide-binding proteins (G proteins) and modulates the activity of downstream effectors, such as adenylate cyclase. This Callorhinchus milii (Ghost shark) protein is G-protein coupled receptor 4.